A 60-amino-acid chain; its full sequence is Large ribosomal subunit protein bL33 (60 aa).

Belongs to the bacterial ribosomal protein bL33 family.

The polypeptide is Large ribosomal subunit protein bL33 (Flavobacterium psychrophilum (strain ATCC 49511 / DSM 21280 / CIP 103535 / JIP02/86)).